The sequence spans 260 residues: DNA repair protein RecO (260 aa).

Belongs to the RecO family.

Functionally, involved in DNA repair and RecF pathway recombination. This is DNA repair protein RecO from Streptococcus suis (strain 98HAH33).